A 179-amino-acid polypeptide reads, in one-letter code: MSRIGKMPIRLADQAQVEVKENMINVTGPKGALSQALVDEVIVSVADGAVTVQRKDDSKRARAMHGLYRMLVSNMVEGVTKGFTRKLEMSGVGYRAELKGNLLALTLGYSHMIYFQPPAEIKIEVPDPTTVLVSGIDKALVGQIAAKIRSFRKPEPYRGKGIKYEGEVIRRKEGKAAGK.

This sequence belongs to the universal ribosomal protein uL6 family. As to quaternary structure, part of the 50S ribosomal subunit.

Functionally, this protein binds to the 23S rRNA, and is important in its secondary structure. It is located near the subunit interface in the base of the L7/L12 stalk, and near the tRNA binding site of the peptidyltransferase center. The protein is Large ribosomal subunit protein uL6 of Chlorobaculum tepidum (strain ATCC 49652 / DSM 12025 / NBRC 103806 / TLS) (Chlorobium tepidum).